The following is a 413-amino-acid chain: Multifunctional CCA protein (413 aa).

G8 and R11 together coordinate ATP. CTP contacts are provided by G8 and R11. 2 residues coordinate Mg(2+): D21 and D23. ATP-binding residues include R91, R143, and R146. 3 residues coordinate CTP: R91, R143, and R146. The region spanning 232-333 is the HD domain; that stretch reads TGVHVMMVID…VRLLERADAL (102 aa).

This sequence belongs to the tRNA nucleotidyltransferase/poly(A) polymerase family. Bacterial CCA-adding enzyme type 1 subfamily. Monomer. Can also form homodimers and oligomers. Mg(2+) is required as a cofactor. The cofactor is Ni(2+).

The enzyme catalyses a tRNA precursor + 2 CTP + ATP = a tRNA with a 3' CCA end + 3 diphosphate. It catalyses the reaction a tRNA with a 3' CCA end + 2 CTP + ATP = a tRNA with a 3' CCACCA end + 3 diphosphate. In terms of biological role, catalyzes the addition and repair of the essential 3'-terminal CCA sequence in tRNAs without using a nucleic acid template. Adds these three nucleotides in the order of C, C, and A to the tRNA nucleotide-73, using CTP and ATP as substrates and producing inorganic pyrophosphate. tRNA 3'-terminal CCA addition is required both for tRNA processing and repair. Also involved in tRNA surveillance by mediating tandem CCA addition to generate a CCACCA at the 3' terminus of unstable tRNAs. While stable tRNAs receive only 3'-terminal CCA, unstable tRNAs are marked with CCACCA and rapidly degraded. This is Multifunctional CCA protein from Burkholderia pseudomallei (strain 668).